A 230-amino-acid chain; its full sequence is V-type proton ATPase subunit E (230 aa).

This sequence belongs to the V-ATPase E subunit family. In terms of assembly, V-ATPase is a heteromultimeric enzyme composed of a peripheral catalytic V1 complex (components A to H) attached to an integral membrane V0 proton pore complex (components: a, c, c', c'' and d).

Functionally, subunit of the peripheral V1 complex of vacuolar ATPase essential for assembly or catalytic function. V-ATPase is responsible for acidifying a variety of intracellular compartments in eukaryotic cells. The chain is V-type proton ATPase subunit E (VATE) from Citrus limon (Lemon).